The chain runs to 345 residues: Anthranilate phosphoribosyltransferase (345 aa).

Residues G88, 91–92, T96, 98–101, 116–124, and S128 each bind 5-phospho-alpha-D-ribose 1-diphosphate; these read GD, NIST, and KHGNRSASG. G88 contributes to the anthranilate binding site. S100 is a Mg(2+) binding site. N119 provides a ligand contact to anthranilate. R174 contacts anthranilate. The Mg(2+) site is built by D233 and E234.

It belongs to the anthranilate phosphoribosyltransferase family. In terms of assembly, homodimer. Mg(2+) serves as cofactor.

The catalysed reaction is N-(5-phospho-beta-D-ribosyl)anthranilate + diphosphate = 5-phospho-alpha-D-ribose 1-diphosphate + anthranilate. It functions in the pathway amino-acid biosynthesis; L-tryptophan biosynthesis; L-tryptophan from chorismate: step 2/5. In terms of biological role, catalyzes the transfer of the phosphoribosyl group of 5-phosphorylribose-1-pyrophosphate (PRPP) to anthranilate to yield N-(5'-phosphoribosyl)-anthranilate (PRA). The polypeptide is Anthranilate phosphoribosyltransferase (Prochlorococcus marinus (strain NATL1A)).